Consider the following 151-residue polypeptide: Cell division control protein 2 homolog 2 (151 aa).

One can recognise a Protein kinase domain in the interval 1-151 (ALKEIRMDNE…IMQTLQIESL (151 aa)). Position 3 (lysine 3) interacts with ATP. The active-site Proton acceptor is the aspartate 113.

It belongs to the protein kinase superfamily. CMGC Ser/Thr protein kinase family. CDC2/CDKX subfamily.

It catalyses the reaction L-seryl-[protein] + ATP = O-phospho-L-seryl-[protein] + ADP + H(+). The enzyme catalyses L-threonyl-[protein] + ATP = O-phospho-L-threonyl-[protein] + ADP + H(+). The catalysed reaction is [DNA-directed RNA polymerase] + ATP = phospho-[DNA-directed RNA polymerase] + ADP + H(+). The sequence is that of Cell division control protein 2 homolog 2 from Pisum sativum (Garden pea).